Reading from the N-terminus, the 783-residue chain is RNA exonuclease 5 (783 aa).

An Exonuclease domain is found at 230–378 (LFGLDCEMCL…EDARTTLELA (149 aa)). RRM domains are found at residues 503–577 (STVY…RPVT) and 598–677 (GTIY…RHLH).

The chain is RNA exonuclease 5 (REXO5) from Bos taurus (Bovine).